Consider the following 172-residue polypeptide: Putative methyltransferase Mtx subunit A (172 aa).

Belongs to the MtrA family. As to quaternary structure, may be part of a complex composed of 3 subunits; MtxA, MtxH and MtxX.

This chain is Putative methyltransferase Mtx subunit A (mtxA), found in Methanosarcina mazei (strain ATCC BAA-159 / DSM 3647 / Goe1 / Go1 / JCM 11833 / OCM 88) (Methanosarcina frisia).